The chain runs to 689 residues: Small ribosomal subunit protein mS39 (689 aa).

A mitochondrion-targeting transit peptide spans Met1–Tyr37. The residue at position 126 (Lys126) is an N6-acetyllysine. 10 PPR repeats span residues Ile149–Val183, Ser184–Glu219, Asn255–Ala289, Asp290–Pro330, Asn331–Pro367, Ser368–Arg404, Asp412–Lys446, Arg454–Pro488, His489–Phe523, and Pro572–Pro606. The tract at residues Asn665–Lys689 is disordered. Residues Ser673–Lys689 show a composition bias toward acidic residues.

This sequence belongs to the mitochondrion-specific ribosomal protein mS39 family. In terms of assembly, component of the mitochondrial ribosome small subunit (28S) which comprises a 12S rRNA and about 30 distinct proteins. Associated with the 12S mitochondrial rRNA (12S mt-rRNA).

Its subcellular location is the mitochondrion. Mitochondrial RNA-binding protein that has a role in mitochondrial translation. This Pongo abelii (Sumatran orangutan) protein is Small ribosomal subunit protein mS39 (PTCD3).